We begin with the raw amino-acid sequence, 265 residues long: Phosphate import ATP-binding protein PstB (265 aa).

In terms of domain architecture, ABC transporter spans 11–260; that stretch reads VSADEVKIAA…PRDPRTESYI (250 aa). Residue 50 to 57 coordinates ATP; that stretch reads GPSGCGKS.

It belongs to the ABC transporter superfamily. Phosphate importer (TC 3.A.1.7) family. The complex is composed of two ATP-binding proteins (PstB), two transmembrane proteins (PstC and PstA) and a solute-binding protein (PstS).

Its subcellular location is the cell inner membrane. It catalyses the reaction phosphate(out) + ATP + H2O = ADP + 2 phosphate(in) + H(+). Part of the ABC transporter complex PstSACB involved in phosphate import. Responsible for energy coupling to the transport system. This is Phosphate import ATP-binding protein PstB from Cereibacter sphaeroides (strain ATCC 17023 / DSM 158 / JCM 6121 / CCUG 31486 / LMG 2827 / NBRC 12203 / NCIMB 8253 / ATH 2.4.1.) (Rhodobacter sphaeroides).